The primary structure comprises 274 residues: Aquaporin C (274 aa).

Residues 1 to 33 are Cytoplasmic-facing; sequence MPFLHLFTPYTNADNTKLILRVNESRLRLFTRQ. The helical transmembrane segment at 34–54 threads the bilayer; that stretch reads LLAEFFGTLFVVYIVSGSTLA. The Extracellular portion of the chain corresponds to 55 to 66; it reads ANFAVSDPIVRV. A helical transmembrane segment spans residues 67-87; the sequence is CLICLVQGFAFAAIIWSISGI. At 88–105 the chain is on the cytoplasmic side; sequence SGCQLNPAVTVGCVTTGR. The short motif at 93-95 is the NPA 1 element; that stretch reads NPA. The chain crosses the membrane as a helical span at residues 106-126; that stretch reads MGILNGIAFIIFQCVGALVGA. Residues 127–154 lie on the Extracellular side of the membrane; it reads GMMKASLPTFYERDLSATTLATGVNVAR. Residues 155–175 traverse the membrane as a helical segment; the sequence is GFFLEMVTTSFLVFVVLGVAV. Residues 176–185 lie on the Cytoplasmic side of the membrane; it reads YNEWDPKISR. The chain crosses the membrane as a helical span at residues 186–206; it reads VAPLAIGCAVIAGVGFLNLFT. Residues 207–229 are Extracellular-facing; that stretch reads GGSLNPARSFGPAVFSDTWHRHY. The short motif at 211-213 is the NPA 2 element; that stretch reads NPA. A helical membrane pass occupies residues 230 to 250; sequence IYWFGPICGGIIAGLFWRIFL. The Cytoplasmic segment spans residues 251 to 274; the sequence is SEKVLLIDRPYTDFHRSTYGTATK.

This sequence belongs to the MIP/aquaporin (TC 1.A.8) family.

It is found in the cell membrane. Functionally, may form a water-specific channel. The protein is Aquaporin C (wacA) of Dictyostelium discoideum (Social amoeba).